A 114-amino-acid polypeptide reads, in one-letter code: Fumarate reductase subunit D (114 aa).

A run of 3 helical transmembrane segments spans residues 27 to 47, 50 to 70, and 94 to 114; these read ICFPVLILILGILLPLGLIPM, IIVFAHTWLGKLVILAVTIFP, and WLFYGLSTLYSIVVLFAVIAL.

Belongs to the FrdD family. As to quaternary structure, part of an enzyme complex containing four subunits: a flavoprotein (FrdA), an iron-sulfur protein (FrdB), and two hydrophobic anchor proteins (FrdC and FrdD).

The protein localises to the cell inner membrane. Its function is as follows. Anchors the catalytic components of the fumarate reductase complex to the cell membrane, binds quinones. This Haemophilus ducreyi (strain 35000HP / ATCC 700724) protein is Fumarate reductase subunit D.